Here is a 248-residue protein sequence, read N- to C-terminus: UPF0736 protein BCG9842_B4111 (248 aa).

It belongs to the UPF0736 family.

The chain is UPF0736 protein BCG9842_B4111 from Bacillus cereus (strain G9842).